The chain runs to 258 residues: UPF0328 protein ECU07_0060 (258 aa).

Belongs to the UPF0328 family.

The polypeptide is UPF0328 protein ECU07_0060 (Encephalitozoon cuniculi (strain GB-M1) (Microsporidian parasite)).